The chain runs to 660 residues: DNA ligase (660 aa).

NAD(+)-binding positions include 31-35 (DKEYD), 79-80 (SL), and glutamate 111. Lysine 113 serves as the catalytic N6-AMP-lysine intermediate. NAD(+) is bound by residues arginine 134, glutamate 168, lysine 280, and lysine 304. Residues cysteine 397, cysteine 400, cysteine 413, and cysteine 419 each coordinate Zn(2+). In terms of domain architecture, BRCT spans 577 to 660 (RQESIFSGKT…LDEAAFEALL (84 aa)).

It belongs to the NAD-dependent DNA ligase family. LigA subfamily. It depends on Mg(2+) as a cofactor. Mn(2+) serves as cofactor.

The catalysed reaction is NAD(+) + (deoxyribonucleotide)n-3'-hydroxyl + 5'-phospho-(deoxyribonucleotide)m = (deoxyribonucleotide)n+m + AMP + beta-nicotinamide D-nucleotide.. In terms of biological role, DNA ligase that catalyzes the formation of phosphodiester linkages between 5'-phosphoryl and 3'-hydroxyl groups in double-stranded DNA using NAD as a coenzyme and as the energy source for the reaction. It is essential for DNA replication and repair of damaged DNA. The sequence is that of DNA ligase from Alkaliphilus metalliredigens (strain QYMF).